The sequence spans 466 residues: Pentatricopeptide repeat-containing protein At4g01400, mitochondrial (466 aa).

The N-terminal 34 residues, 1–34, are a transit peptide targeting the mitochondrion; it reads MIRRPIYDFAAVFRHLTSPLSTSSRFLFYSSSEH. PPR repeat units lie at residues 118–152, 153–188, 189–223, 224–258, 259–293, 294–328, 329–363, and 364–398; these read TGEIFTYLIKVYAEAKLPEKVLSTFYKMLEFNFTP, QPKHLNRILDVLVSHRGYLQKAFELFKSSRLHGVMP, NTRSYNLLMQAFCLNDDLSIAYQLFGKMLERDVVP, DVDSYKILIQGFCRKGQVNGAMELLDDMLNKGFVP, DRLSYTTLLNSLCRKTQLREAYKLLCRMKLKGCNP, DLVHYNTMILGFCREDRAMDARKVLDDMLSNGCSP, NSVSYRTLIGGLCDQGMFDEGKKYLEEMISKGFSP, and HFSVSNCLVKGFCSFGKVEEACDVVEVVMKNGETL.

Belongs to the PPR family. P subfamily.

The protein localises to the mitochondrion. This is Pentatricopeptide repeat-containing protein At4g01400, mitochondrial from Arabidopsis thaliana (Mouse-ear cress).